The chain runs to 306 residues: D-alanine--D-alanine ligase (306 aa).

Residues 106-301 (KLLWQSAGIN…FEELVLKILG (196 aa)) enclose the ATP-grasp domain. 132–187 (AKELGLPLIVKPSREGSTIGLSKVREAGEVAAAWHLAARHDAMVLAEQFIEGTELT) lines the ATP pocket. Residues D255, E268, and N270 each coordinate Mg(2+).

It belongs to the D-alanine--D-alanine ligase family. It depends on Mg(2+) as a cofactor. Mn(2+) serves as cofactor.

Its subcellular location is the cytoplasm. It catalyses the reaction 2 D-alanine + ATP = D-alanyl-D-alanine + ADP + phosphate + H(+). It participates in cell wall biogenesis; peptidoglycan biosynthesis. In terms of biological role, cell wall formation. This chain is D-alanine--D-alanine ligase, found in Nitrosospira multiformis (strain ATCC 25196 / NCIMB 11849 / C 71).